A 598-amino-acid polypeptide reads, in one-letter code: uncharacterized protein (598 aa).

Serine 46 bears the Phosphoserine mark. Residues 106–441 (LQNHLKTGPF…ADYISLSYSG (336 aa)) form the SAC domain. 2 helical membrane-spanning segments follow: residues 508–528 (TIRC…MTLF) and 535–555 (ILPP…SLYY).

It is found in the endoplasmic reticulum membrane. This is an uncharacterized protein from Schizosaccharomyces pombe (strain 972 / ATCC 24843) (Fission yeast).